A 108-amino-acid polypeptide reads, in one-letter code: Class I hydrophobin eas (108 aa).

Residues 1 to 26 form the signal peptide; the sequence is MQFTSVFTILAIAMTAAAAPAEVVPR. 4 disulfides stabilise this stretch: C35/C86, C44/C80, C45/C71, and C87/C106.

Belongs to the fungal hydrophobin family. As to quaternary structure, self-assembles to form functional amyloid fibrils called rodlets. Self-assembly into fibrillar rodlets occurs spontaneously at hydrophobic:hydrophilic interfaces and the rodlets further associate laterally to form amphipathic monolayers.

The protein localises to the secreted. It localises to the spore wall. Aerial growth, conidiation, and dispersal of filamentous fungi in the environment rely upon a capability of their secreting small amphipathic proteins called hydrophobins (HPBs) with low sequence identity. Class I can self-assemble into an outermost layer of rodlet bundles on aerial cell surfaces, conferring cellular hydrophobicity that supports fungal growth, development and dispersal; whereas class II form highly ordered films at water-air interfaces through intermolecular interactions but contribute nothing to the rodlet structure. Eas is a class I hydrophobin that forms functional amyloid fibrils called rodlets that facilitate spore formation and dispersal. The chain is Class I hydrophobin eas from Neurospora crassa (strain ATCC 24698 / 74-OR23-1A / CBS 708.71 / DSM 1257 / FGSC 987).